A 153-amino-acid chain; its full sequence is MNVGVAHSEVNPNTRVMNSRGIWLAYIILVGLLHMVLLSIPFFSIPVVWTLTNVIHNLATYVFLHTVKGTPFETPDQGKARLLTHWEQMDYGLQFTSSRKFLSISPIVLYLLASFYTKYDAAHFLINTASLLSVLLPKLPQFHGVRVFGINKY.

Residues 1–21 (MNVGVAHSEVNPNTRVMNSRG) are Cytoplasmic-facing. 2 helical membrane passes run 22–42 (IWLA…SIPF) and 43–63 (FSIP…TYVF). The Cytoplasmic portion of the chain corresponds to 64 to 105 (LHTVKGTPFETPDQGKARLLTHWEQMDYGLQFTSSRKFLSIS). The helical transmembrane segment at 106 to 126 (PIVLYLLASFYTKYDAAHFLI) threads the bilayer. The Extracellular portion of the chain corresponds to 127-153 (NTASLLSVLLPKLPQFHGVRVFGINKY).

This sequence belongs to the ORM family. As to quaternary structure, ceramide-sensitive subunit of the serine palmitoyltransferase (SPT) complex, which is also composed of SPTLC1, SPTLC2/3 and SPTSSA/B. In terms of tissue distribution, widely expressed. Expressed in adult and fetal heart, brain, lung, liver, skeletal muscle and kidney. Expressed in adult pancreas and placenta and in fetal spleen abd thymus.

It is found in the endoplasmic reticulum membrane. Its function is as follows. Plays an essential role in the homeostatic regulation of sphingolipid de novo biosynthesis by modulating the activity of the serine palmitoyltransferase (SPT) in response to ceramide levels. When complexed to SPT, the binding of ceramides to its N-terminus stabilizes a conformation that block SPT substrate entry, hence preventing SPT catalytic activity. Through this mechanism, maintains ceramide levels at sufficient concentrations for the production of complex sphingolipids, but which prevents the accumulation of ceramides to levels that trigger apoptosis. In Homo sapiens (Human), this protein is ORM1-like protein 2 (ORMDL2).